Consider the following 277-residue polypeptide: Small ribosomal subunit protein uS2 (277 aa).

Residues 254–277 (LAGAGSSALNDSGADLSEANPTEA) form a disordered region.

The protein belongs to the universal ribosomal protein uS2 family.

This Mycobacterium leprae (strain TN) protein is Small ribosomal subunit protein uS2 (rpsB).